The chain runs to 129 residues: Large ribosomal subunit protein bL21 (129 aa).

Belongs to the bacterial ribosomal protein bL21 family. Part of the 50S ribosomal subunit. Contacts protein L20.

Functionally, this protein binds to 23S rRNA in the presence of protein L20. The polypeptide is Large ribosomal subunit protein bL21 (Prochlorococcus marinus (strain MIT 9313)).